A 506-amino-acid polypeptide reads, in one-letter code: Ribose import ATP-binding protein RbsA 2 (506 aa).

ABC transporter domains lie at 5–241 and 254–498; these read LRLS…VGRR and ADAP…TAGT. 37 to 44 serves as a coordination point for ATP; it reads GENGAGKS.

The protein belongs to the ABC transporter superfamily. Ribose importer (TC 3.A.1.2.1) family. In terms of assembly, the complex is composed of an ATP-binding protein (RbsA), two transmembrane proteins (RbsC) and a solute-binding protein (RbsB).

The protein localises to the cell inner membrane. It carries out the reaction D-ribose(out) + ATP + H2O = D-ribose(in) + ADP + phosphate + H(+). Part of the ABC transporter complex RbsABC involved in ribose import. Responsible for energy coupling to the transport system. This chain is Ribose import ATP-binding protein RbsA 2, found in Burkholderia cenocepacia (strain HI2424).